We begin with the raw amino-acid sequence, 363 residues long: Melanoma-associated antigen B16 (363 aa).

The segment at 33 to 124 (EPCSSPHLMA…PDQSDSTDLP (92 aa)) is disordered. Residues 82–97 (ASTSSDLQHPYDSSSE) show a composition bias toward low complexity. In terms of domain architecture, MAGE spans 128–327 (VDGKVDFLVN…TVFLSQYEEA (200 aa)). A disordered region spans residues 342-363 (HADSSSTSGESSSDTSSNFSQV).

The polypeptide is Melanoma-associated antigen B16 (Mageb16) (Mus musculus (Mouse)).